We begin with the raw amino-acid sequence, 448 residues long: uncharacterized protein (448 aa).

K297 carries the N6-(pyridoxal phosphate)lysine modification.

The protein belongs to the class-III pyridoxal-phosphate-dependent aminotransferase family. Requires pyridoxal 5'-phosphate as cofactor.

This is an uncharacterized protein from Sinorhizobium fredii (strain NBRC 101917 / NGR234).